A 1141-amino-acid polypeptide reads, in one-letter code: Probable ubiquitin carboxyl-terminal hydrolase 2 (1141 aa).

Residue Thr112 is modified to Phosphothreonine. Position 113 is a phosphoserine (Ser113). Thr115 bears the Phosphothreonine mark. The region spanning 614–1124 (IGLENTGNLC…NPYMLTYIRK (511 aa)) is the USP domain. The active-site Nucleophile is Cys623. The residue at position 721 (Thr721) is a Phosphothreonine. A Phosphoserine modification is found at Ser722. Residues 748–770 (EEQAQGLEQEQGQDEAKSPAEQS) are disordered. The Proton acceptor role is filled by His1076.

The protein belongs to the peptidase C19 family.

It catalyses the reaction Thiol-dependent hydrolysis of ester, thioester, amide, peptide and isopeptide bonds formed by the C-terminal Gly of ubiquitin (a 76-residue protein attached to proteins as an intracellular targeting signal).. This chain is Probable ubiquitin carboxyl-terminal hydrolase 2 (ubp2), found in Schizosaccharomyces pombe (strain 972 / ATCC 24843) (Fission yeast).